A 157-amino-acid polypeptide reads, in one-letter code: MIAIYPGSFDPITLGHLDIIERGGQLFDLVIVTVLRNPNKQPLFSVEKRVEQIRECTQHLSNVEVDSFTGLTVEYAKLRNAKVLLRGLRVLSDFEKELQMAHTNVTLWDGIETVFLATAKEYSFLSSSIVKEIAKFGGSISHLVPKNVAQDITLYYS.

Substrate is bound at residue serine 8. ATP is bound by residues 8-9 (SF) and histidine 16. Substrate is bound by residues lysine 40, threonine 72, and arginine 86. Residues 87 to 89 (GLR), glutamate 97, and 122 to 128 (YSFLSSS) contribute to the ATP site.

It belongs to the bacterial CoaD family. Homohexamer. It depends on Mg(2+) as a cofactor.

It is found in the cytoplasm. It carries out the reaction (R)-4'-phosphopantetheine + ATP + H(+) = 3'-dephospho-CoA + diphosphate. The protein operates within cofactor biosynthesis; coenzyme A biosynthesis; CoA from (R)-pantothenate: step 4/5. Reversibly transfers an adenylyl group from ATP to 4'-phosphopantetheine, yielding dephospho-CoA (dPCoA) and pyrophosphate. The protein is Phosphopantetheine adenylyltransferase of Gloeothece citriformis (strain PCC 7424) (Cyanothece sp. (strain PCC 7424)).